A 365-amino-acid chain; its full sequence is Tubulin-like protein CetZ (365 aa).

Residues 10 to 14 (QCGGK), 103 to 105 (GTG), E136, N163, and N181 each bind GTP.

The protein belongs to the CetZ family.

It is found in the cytoplasm. Involved in cell shape control. The polypeptide is Tubulin-like protein CetZ (Pyrococcus abyssi (strain GE5 / Orsay)).